The chain runs to 139 residues: Endoribonuclease YbeY (139 aa).

Residues His-99, His-103, and His-109 each coordinate Zn(2+).

This sequence belongs to the endoribonuclease YbeY family. It depends on Zn(2+) as a cofactor.

The protein localises to the cytoplasm. Functionally, single strand-specific metallo-endoribonuclease involved in late-stage 70S ribosome quality control and in maturation of the 3' terminus of the 16S rRNA. In Sulfurimonas denitrificans (strain ATCC 33889 / DSM 1251) (Thiomicrospira denitrificans (strain ATCC 33889 / DSM 1251)), this protein is Endoribonuclease YbeY.